Reading from the N-terminus, the 123-residue chain is Protein Wnt-3 (123 aa).

Serine 1 carries the O-palmitoleoyl serine; by PORCN lipid modification. Cysteine 89 and cysteine 104 are disulfide-bonded. A glycan (N-linked (GlcNAc...) asparagine) is linked at asparagine 90.

The protein belongs to the Wnt family. Post-translationally, palmitoleoylation is required for efficient binding to frizzled receptors. Depalmitoleoylation leads to Wnt signaling pathway inhibition.

Its subcellular location is the secreted. It is found in the extracellular space. It localises to the extracellular matrix. Functionally, ligand for members of the frizzled family of seven transmembrane receptors. Functions in the canonical Wnt signaling pathway that results in activation of transcription factors of the TCF/LEF family. Required for normal embryonic development. This Eptatretus stoutii (Pacific hagfish) protein is Protein Wnt-3 (WNT-3).